Consider the following 148-residue polypeptide: Large ribosomal subunit protein uL15 (148 aa).

Basic residues predominate over residues 1–30; that stretch reads MPSKLRKTRKLRGHVSHGHGRIGKHRKHPG. The segment at 1-38 is disordered; it reads MPSKLRKTRKLRGHVSHGHGRIGKHRKHPGGRGNAGGM.

It belongs to the universal ribosomal protein uL15 family. As to quaternary structure, component of the large ribosomal subunit.

It localises to the cytoplasm. Its function is as follows. Component of the large ribosomal subunit. The ribosome is a large ribonucleoprotein complex responsible for the synthesis of proteins in the cell. The protein is Large ribosomal subunit protein uL15 (rpl27a) of Xenopus laevis (African clawed frog).